The sequence spans 107 residues: Bombesin (107 aa).

The N-terminal stretch at M1–C26 is a signal peptide. Residues M27–L41 constitute a propeptide that is removed on maturation. Q42 carries the post-translational modification Pyrrolidone carboxylic acid. A Methionine amide modification is found at M55. The propeptide occupies G56 to N107.

In terms of tissue distribution, expressed by the skin glands.

The protein resides in the secreted. In terms of biological role, stimulates smooth muscle contraction. Role in induction of hypothermia, stimulation of DNA replication and release of many gastrointestinal hormones. Possesses insulin-releasing activity. The chain is Bombesin from Bombina variegata (Yellow-bellied toad).